The sequence spans 102 residues: Putative defensin-like protein 298 (102 aa).

A signal peptide spans 1–29 (MSASKATMLILFALFLSDILLVSIPRAEA). Intrachain disulfides connect cysteine 35/cysteine 53, cysteine 41/cysteine 58, cysteine 46/cysteine 60, cysteine 74/cysteine 93, cysteine 80/cysteine 98, and cysteine 86/cysteine 100.

It belongs to the DEFL family.

Its subcellular location is the secreted. The protein is Putative defensin-like protein 298 of Arabidopsis thaliana (Mouse-ear cress).